Reading from the N-terminus, the 37-residue chain is Large ribosomal subunit protein bL36 (37 aa).

It belongs to the bacterial ribosomal protein bL36 family.

The sequence is that of Large ribosomal subunit protein bL36 from Caldanaerobacter subterraneus subsp. tengcongensis (strain DSM 15242 / JCM 11007 / NBRC 100824 / MB4) (Thermoanaerobacter tengcongensis).